The primary structure comprises 246 residues: Nodulation protein G (246 aa).

Val8–Ala32 provides a ligand contact to NAD(+). Ser140 serves as a coordination point for substrate. Tyr153 (proton acceptor) is an active-site residue.

The protein belongs to the short-chain dehydrogenases/reductases (SDR) family.

Proposed to modify Nod factor fatty acyl chain. In Azospirillum brasilense, this protein is Nodulation protein G (nodG).